Consider the following 356-residue polypeptide: Deoxyribonuclease-2-beta (356 aa).

Positions 1-22 (MTAQPLKAALPLLFVALSGVLG) are cleaved as a signal peptide. N-linked (GlcNAc...) asparagine glycosylation is found at Asn77, Asn98, Asn114, and Asn273.

This sequence belongs to the DNase II family. As to expression, liver specific.

Its subcellular location is the lysosome. It catalyses the reaction Endonucleolytic cleavage to nucleoside 3'-phosphates and 3'-phosphooligonucleotide end-products.. Hydrolyzes DNA under acidic conditions. Does not require divalent cations for activity. Participates in the degradation of nuclear DNA during lens cell differentiation. The polypeptide is Deoxyribonuclease-2-beta (Dnase2b) (Rattus norvegicus (Rat)).